The sequence spans 263 residues: Nuclear egress protein 2 (263 aa).

At 1–235 (MASGKKLIDQ…STSLTGRCPS (235 aa)) the chain is on the perinuclear space side. Residues 236–256 (WGAACALLLLSLAVGLMAILA) form a helical membrane-spanning segment. Topologically, residues 257-263 (AKLMQWP) are nuclear.

Belongs to the herpesviridae NEC2 protein family. Forms a heterohexameric complex with NEC1. Phosphorylated.

Its subcellular location is the host nucleus inner membrane. Functionally, plays an essential role in virion nuclear egress, the first step of virion release from infected cell. Within the host nucleus, NEC1 interacts with the newly formed capsid through the vertexes and directs it to the inner nuclear membrane by associating with NEC2. Induces the budding of the capsid at the inner nuclear membrane as well as its envelopment into the perinuclear space. There, the NEC1/NEC2 complex promotes the fusion of the enveloped capsid with the outer nuclear membrane and the subsequent release of the viral capsid into the cytoplasm where it will reach the secondary budding sites in the host Golgi or trans-Golgi network. The chain is Nuclear egress protein 2 from Connochaetes taurinus (Blue wildebeest).